The sequence spans 313 residues: Sororin-like protein 1 (313 aa).

The FGF motif signature appears at 44-46 (FGF). The disordered stretch occupies residues 105-287 (ADENQQSVPT…NDNLKELTPG (183 aa)). Residues 107 to 118 (ENQQSVPTVSIA) are compositionally biased toward polar residues. The segment covering 123 to 134 (PELPPSSSPLLP) has biased composition (pro residues). Residues 135 to 154 (PNGSESSSPIPLSLLSTSSL) are compositionally biased toward low complexity. A compositionally biased stretch (polar residues) spans 155-170 (QQRKITPSNLSNTSKP). The segment covering 184 to 196 (HGHHLTRLRKKRR) has biased composition (basic residues). Positions 249–264 (EKKILKTYHSQDKDTA) are enriched in basic and acidic residues. The segment at 288–310 (KKEYLKSIKKYFQDVDDYQLHVV) is C-terminal Sororin domain.

Belongs to the sororin family. Interacts with Pds5 and Psm3.

The protein localises to the nucleus. Functionally, regulator of sister chromatid cohesion in mitosis stabilizing cohesin complex association with chromatin. Antagonizes the action of wpl1 which stimulates cohesin dissociation from chromatin. Cohesion ensures that chromosome partitioning is accurate in dividing cells and may play an important role in DNA repair. The polypeptide is Sororin-like protein 1 (Schizosaccharomyces pombe (strain 972 / ATCC 24843) (Fission yeast)).